Here is a 194-residue protein sequence, read N- to C-terminus: Putative 3-methyladenine DNA glycosylase (194 aa).

This sequence belongs to the DNA glycosylase MPG family.

The sequence is that of Putative 3-methyladenine DNA glycosylase from Mycolicibacterium fortuitum (Mycobacterium fortuitum).